Consider the following 228-residue polypeptide: 2,3-bisphosphoglycerate-dependent phosphoglycerate mutase (228 aa).

Substrate contacts are provided by residues 8 to 15, 21 to 22, Arg60, 87 to 90, Lys98, 114 to 115, and 183 to 184; these read RHGQSVWN, TG, ERHY, RR, and GN. His9 acts as the Tele-phosphohistidine intermediate in catalysis. Catalysis depends on Glu87, which acts as the Proton donor/acceptor.

This sequence belongs to the phosphoglycerate mutase family. BPG-dependent PGAM subfamily.

It catalyses the reaction (2R)-2-phosphoglycerate = (2R)-3-phosphoglycerate. The protein operates within carbohydrate degradation; glycolysis; pyruvate from D-glyceraldehyde 3-phosphate: step 3/5. In terms of biological role, catalyzes the interconversion of 2-phosphoglycerate and 3-phosphoglycerate. The polypeptide is 2,3-bisphosphoglycerate-dependent phosphoglycerate mutase (Staphylococcus carnosus (strain TM300)).